The primary structure comprises 321 residues: MIFLTLEHIFTHISFSIVSIVITIHLMTLLVDGIVGLYDSSEKGMIATFLCITGFLVTRWIYSRHFPLSDLYESLIFLSWSFSIIHMVPKIRNHKNHLSAITAPSAIFTQGFATSGLLTEMHQSAILVPALQSQWLMMHVSMMVLSYAALLCGSLLSIALLVIRFRKNIEIFGKDNYLLIGSFSFGESQYVNERSNILRNTSFLSFRNYYRYQLIQQLDHWSYRVISLGFIFLTIGILSGAVWANEAWGAYWNWDPKETWAFITWTIFAIYLHTRTNKDLQGANSAIVASIGFLIIWICYFGVNLLGIGLHSYGSFTLTSN.

A run of 8 helical transmembrane segments spans residues 17 to 37 (IVSI…IVGL), 43 to 63 (KGMI…WIYS), 71 to 91 (LYES…VPKI), 98 to 118 (LSAI…SGLL), 143 to 163 (MVLS…LLVI), 225 to 245 (VISL…VWAN), 258 to 275 (ETWA…LHTR), and 286 to 306 (AIVA…VNLL).

The protein belongs to the CcmF/CycK/Ccl1/NrfE/CcsA family. May interact with Ccs1.

Its subcellular location is the plastid. The protein localises to the chloroplast thylakoid membrane. Required during biogenesis of c-type cytochromes (cytochrome c6 and cytochrome f) at the step of heme attachment. This chain is Cytochrome c biogenesis protein CcsA, found in Platanus occidentalis (Sycamore).